Consider the following 380-residue polypeptide: Cytochrome b (380 aa).

4 consecutive transmembrane segments (helical) span residues 34-54, 78-99, 114-134, and 179-199; these read FGSLLGMCLIIQILTGLFLAM, WLIRNIHANGASMFFICVYLHI, WNIGVVILLLLMVTAFVGYVL, and FFTFHFLFPFVTAALTMIHLL. 2 residues coordinate heme b: His84 and His98. Heme b is bound by residues His183 and His197. His202 contributes to the a ubiquinone binding site. 4 helical membrane-spanning segments follow: residues 227–247, 289–309, 321–341, and 348–368; these read YKDLVGFFILLFLLTLLALFT, LGGVLALVFSILILLLVPILH, ITQILFWLLVTNTIILTWIGG, and FITIGQIASITYFSFFLILFP.

This sequence belongs to the cytochrome b family. In terms of assembly, the cytochrome bc1 complex contains 3 respiratory subunits (MT-CYB, CYC1 and UQCRFS1), 2 core proteins (UQCRC1 and UQCRC2) and probably 6 low-molecular weight proteins. Requires heme b as cofactor.

The protein resides in the mitochondrion inner membrane. Component of the ubiquinol-cytochrome c reductase complex (complex III or cytochrome b-c1 complex) that is part of the mitochondrial respiratory chain. The b-c1 complex mediates electron transfer from ubiquinol to cytochrome c. Contributes to the generation of a proton gradient across the mitochondrial membrane that is then used for ATP synthesis. In Hemitrygon laosensis (Mekong freshwater stingray), this protein is Cytochrome b (mt-cyb).